The chain runs to 393 residues: Formate-dependent phosphoribosylglycinamide formyltransferase (393 aa).

Residues 22 to 23 and Glu-82 each bind N(1)-(5-phospho-beta-D-ribosyl)glycinamide; that span reads EL. ATP contacts are provided by residues Arg-114, Lys-155, 160–165, 195–198, and Glu-203; these read SSGKGQ and EGLV. The 190-residue stretch at 119-308 folds into the ATP-grasp domain; sequence RLAAETLQLP…EFALHVRAFL (190 aa). 2 residues coordinate Mg(2+): Glu-267 and Glu-279. N(1)-(5-phospho-beta-D-ribosyl)glycinamide contacts are provided by residues Asp-286, Lys-355, and 362 to 363; that span reads RR.

The protein belongs to the PurK/PurT family. Homodimer.

It carries out the reaction N(1)-(5-phospho-beta-D-ribosyl)glycinamide + formate + ATP = N(2)-formyl-N(1)-(5-phospho-beta-D-ribosyl)glycinamide + ADP + phosphate + H(+). It participates in purine metabolism; IMP biosynthesis via de novo pathway; N(2)-formyl-N(1)-(5-phospho-D-ribosyl)glycinamide from N(1)-(5-phospho-D-ribosyl)glycinamide (formate route): step 1/1. In terms of biological role, involved in the de novo purine biosynthesis. Catalyzes the transfer of formate to 5-phospho-ribosyl-glycinamide (GAR), producing 5-phospho-ribosyl-N-formylglycinamide (FGAR). Formate is provided by PurU via hydrolysis of 10-formyl-tetrahydrofolate. The chain is Formate-dependent phosphoribosylglycinamide formyltransferase from Yersinia pseudotuberculosis serotype O:3 (strain YPIII).